The chain runs to 488 residues: Ribulose bisphosphate carboxylase large chain (488 aa).

Residues N127 and T177 each coordinate substrate. K179 acts as the Proton acceptor in catalysis. K181 lines the substrate pocket. Residues K205, D207, and E208 each contribute to the Mg(2+) site. K205 bears the N6-carboxylysine mark. H297 functions as the Proton acceptor in the catalytic mechanism. Substrate-binding residues include R298, H330, and S382.

This sequence belongs to the RuBisCO large chain family. Type I subfamily. Heterohexadecamer of 8 large chains and 8 small chains. Requires Mg(2+) as cofactor.

The protein resides in the plastid. It localises to the chloroplast. It catalyses the reaction 2 (2R)-3-phosphoglycerate + 2 H(+) = D-ribulose 1,5-bisphosphate + CO2 + H2O. The catalysed reaction is D-ribulose 1,5-bisphosphate + O2 = 2-phosphoglycolate + (2R)-3-phosphoglycerate + 2 H(+). RuBisCO catalyzes two reactions: the carboxylation of D-ribulose 1,5-bisphosphate, the primary event in carbon dioxide fixation, as well as the oxidative fragmentation of the pentose substrate in the photorespiration process. Both reactions occur simultaneously and in competition at the same active site. This Rhodomonas salina (Cryptomonas salina) protein is Ribulose bisphosphate carboxylase large chain.